The following is a 174-amino-acid chain: ATP-dependent protease subunit HslV (174 aa).

Thr-2 is an active-site residue. The Na(+) site is built by Gly-157, Cys-160, and Thr-163.

It belongs to the peptidase T1B family. HslV subfamily. In terms of assembly, a double ring-shaped homohexamer of HslV is capped on each side by a ring-shaped HslU homohexamer. The assembly of the HslU/HslV complex is dependent on binding of ATP.

The protein localises to the cytoplasm. It carries out the reaction ATP-dependent cleavage of peptide bonds with broad specificity.. Its activity is regulated as follows. Allosterically activated by HslU binding. Its function is as follows. Protease subunit of a proteasome-like degradation complex believed to be a general protein degrading machinery. The chain is ATP-dependent protease subunit HslV from Shewanella putrefaciens (strain CN-32 / ATCC BAA-453).